The primary structure comprises 216 residues: Chaperone protein TorD (216 aa).

It belongs to the TorD/DmsD family. TorD subfamily.

Its subcellular location is the cytoplasm. Its function is as follows. Involved in the biogenesis of TorA. Acts on TorA before the insertion of the molybdenum cofactor and, as a result, probably favors a conformation of the apoenzyme that is competent for acquiring the cofactor. This chain is Chaperone protein TorD, found in Ferrimonas balearica (strain DSM 9799 / CCM 4581 / KCTC 23876 / PAT).